The following is a 440-amino-acid chain: Protein FPV117 (440 aa).

The protein belongs to the poxviruses G5 family.

The protein is Protein FPV117 of Fowlpox virus (strain NVSL) (FPV).